Here is a 133-residue protein sequence, read N- to C-terminus: Large ribosomal subunit protein uL15 (133 aa).

The tract at residues 1–64 (MGLENLKPAK…QPLQRRLPKI (64 aa)) is disordered.

Belongs to the universal ribosomal protein uL15 family. In terms of assembly, part of the 50S ribosomal subunit.

Functionally, binds to the 23S rRNA. The protein is Large ribosomal subunit protein uL15 of Helicobacter pylori (strain J99 / ATCC 700824) (Campylobacter pylori J99).